Reading from the N-terminus, the 289-residue chain is Serine/threonine-protein phosphatase Pgam5, mitochondrial (289 aa).

This sequence belongs to the phosphoglycerate mutase family. BPG-dependent PGAM subfamily. As to quaternary structure, interacts with Pk92B/ASK1.

The protein resides in the mitochondrion outer membrane. The catalysed reaction is O-phospho-L-seryl-[protein] + H2O = L-seryl-[protein] + phosphate. It catalyses the reaction O-phospho-L-threonyl-[protein] + H2O = L-threonyl-[protein] + phosphate. Displays phosphatase activity for serine/threonine residues, and dephosphorylates and activates Pk92B kinase. Has apparently no phosphoglycerate mutase activity. The polypeptide is Serine/threonine-protein phosphatase Pgam5, mitochondrial (Drosophila mojavensis (Fruit fly)).